Consider the following 100-residue polypeptide: Enhancer of rudimentary homolog (100 aa).

It belongs to the E(R) family. Homodimer.

May have a role in the cell cycle. The sequence is that of Enhancer of rudimentary homolog (erh) from Dictyostelium discoideum (Social amoeba).